A 706-amino-acid chain; its full sequence is MARDYPLERYRNFGIMAHIDAGKTTCSERILYYTGKSHNIGEVHDGAATMDWMEQEQERGITITSAATTTFWERTENGTEPDSEKHRLNIIDTPGHVDFTIEVERSLAVLDGAVCVLDANAGVEPQTETVWRQADRYKVPRMVFVNKMDKIGADFFNCVRMIEDRTGARAVPVGIPIGAETELEGLIDLVTMEEWLWQGEDLGASWIKAPIRDSLNDMALEWRAKMIEAAVEMDDDAMENYLMDGAEPDVPTLRALLRKGTLAMAFVPVLGGSAFKNKGVQPLLNAVIDYLPSPLDVVDYMGFKPGDETETRNIPRRADDDMAFSGLAFKIMNDPFVGSLTFVRIYSGQLRKGDNMINSTKQNNERVGRMMMMHSNNREEIDEAFAGDIIALGGLKNTTTGDTLCDKSDPVVLETMTFPEPVIEIAVEPKTKADQEKMAMALQRLSAEDPSFRVETDIESGQTIMRGMGELHLDILVDRMKREFKVEANIGAPQVAYRETIGHEVEHTYTHKKQSGGSGQYAEVKLLITPTEPGEGYSFESKIVGGAVPKEYIPGVEKGIKSVMDSGPLAGFPVIDFKVQLLDGKFHDVDSSVLAFEIAGRMGMREGMRKAGAKLLEPIMKVEVITPEDYTGGIIGDLTSRRGQVQGQDTRGNAIAIDAFVPLANMFGYINTLRSMSSGRAQFTMQFDHYEPVPQNISDEIQAKYA.

Positions 8-295 constitute a tr-type G domain; sequence ERYRNFGIMA…AVIDYLPSPL (288 aa). Residues 17–24, 92–96, and 146–149 contribute to the GTP site; these read AHIDAGKT, DTPGH, and NKMD.

Belongs to the TRAFAC class translation factor GTPase superfamily. Classic translation factor GTPase family. EF-G/EF-2 subfamily.

The protein localises to the cytoplasm. Its function is as follows. Catalyzes the GTP-dependent ribosomal translocation step during translation elongation. During this step, the ribosome changes from the pre-translocational (PRE) to the post-translocational (POST) state as the newly formed A-site-bound peptidyl-tRNA and P-site-bound deacylated tRNA move to the P and E sites, respectively. Catalyzes the coordinated movement of the two tRNA molecules, the mRNA and conformational changes in the ribosome. The sequence is that of Elongation factor G from Jannaschia sp. (strain CCS1).